Reading from the N-terminus, the 650-residue chain is SPARC-like protein 1 (650 aa).

Positions 1-16 (MKAVLLLLCALGTAVA) are cleaved as a signal peptide. A disordered region spans residues 51–352 (TADIENHPSD…HGAGDDYFIP (302 aa)). The segment covering 54–64 (IENHPSDKAEK) has biased composition (basic and acidic residues). Phosphoserine is present on residues Ser70, Ser78, and Ser86. Positions 75–85 (HEQSTEQDKTY) are enriched in basic and acidic residues. A compositionally biased stretch (acidic residues) spans 91-101 (LKDEEDGDGDL). Composition is skewed to polar residues over residues 116 to 126 (EGTSEPQQKSL) and 135 to 148 (TVSTSYVDPNQRAN). Residue Asn148 is glycosylated (N-linked (GlcNAc...) asparagine). A phosphoserine mark is found at Ser155 and Ser163. Residues 157 to 174 (EQPVSDSHQQPNESSKQT) are compositionally biased toward polar residues. An N-linked (GlcNAc...) asparagine glycan is attached at Asn168. Over residues 189-210 (IPNEEEEEEEDEEEEEEEEPED) the composition is skewed to acidic residues. Ser272 bears the Phosphoserine mark. The segment covering 277-299 (EDKAAGSKEHIPHTEQQDQEGKA) has biased composition (basic and acidic residues). Ser353 bears the Phosphoserine mark. Residues 375 to 415 (EETTTGESENRREAADNQEAKKAESSPNAEPSDEGNSREHS) form a disordered region. Residues 382–398 (SENRREAADNQEAKKAE) show a composition bias toward basic and acidic residues. A Phosphoserine modification is found at Ser406. Residues 418-440 (SCTNFQCKRGHICKTDPQGKPHC) enclose the Follistatin-like domain. Intrachain disulfides connect Cys419/Cys430, Cys424/Cys440, Cys442/Cys476, Cys448/Cys469, Cys458/Cys495, Cys501/Cys612, and Cys620/Cys636. A Kazal-like domain is found at 436–497 (GKPHCVCQDP…QLDYFGACKS (62 aa)). Asn462 carries an N-linked (GlcNAc...) asparagine glycan. An EF-hand domain is found at 608 to 643 (PMEHCITRFFEECDPNKDKHITLKEWGHCFGIKEED). The Ca(2+) site is built by Asp621, Asn623, Asp625, His627, and Glu632.

It belongs to the SPARC family. As to expression, highest expression in brain. Moderate levels in heart, adrenal gland, epididymis and lung. Low levels in kidney, eye, liver, spleen, submandibular gland and testis.

Its subcellular location is the secreted. The protein localises to the extracellular space. It is found in the extracellular matrix. This chain is SPARC-like protein 1 (Sparcl1), found in Mus musculus (Mouse).